Here is a 288-residue protein sequence, read N- to C-terminus: Small ribosomal subunit protein uS2 (288 aa).

Positions 267 to 288 (EEVEEVEEEFIPSEIEDEDEKF) are disordered.

The protein belongs to the universal ribosomal protein uS2 family.

The sequence is that of Small ribosomal subunit protein uS2 from Petrotoga mobilis (strain DSM 10674 / SJ95).